Reading from the N-terminus, the 160-residue chain is Type IV major fimbrial protein FimA (160 aa).

Residues 1–7 (MKSLQKG) constitute a propeptide, leader sequence. The residue at position 8 (Phe-8) is an N-methylphenylalanine. A helical membrane pass occupies residues 8 to 28 (FTLIELMIVVAIIGILAAFAI). A disulfide bond links Cys-63 and Cys-105.

Belongs to the N-Me-Phe pilin family. The pili are polar flexible filaments of about 5.4 nanometers diameter and 2.5 micrometers average length; they consist of only a single polypeptide chain arranged in a helical configuration of five subunits per turn in the assembled pilus.

The protein resides in the fimbrium. The protein localises to the membrane. Functionally, major component of the type IV fimbriae that plays an essential role in twitching motility, natural transformation, and protease secretion. The protein is Type IV major fimbrial protein FimA (fimA) of Dichelobacter nodosus (Bacteroides nodosus).